A 117-amino-acid chain; its full sequence is DNA-directed RNA polymerase subunit omega (117 aa).

Belongs to the RNA polymerase subunit omega family. The RNAP catalytic core consists of 2 alpha, 1 beta, 1 beta' and 1 omega subunit. When a sigma factor is associated with the core the holoenzyme is formed, which can initiate transcription.

The catalysed reaction is RNA(n) + a ribonucleoside 5'-triphosphate = RNA(n+1) + diphosphate. In terms of biological role, promotes RNA polymerase assembly. Latches the N- and C-terminal regions of the beta' subunit thereby facilitating its interaction with the beta and alpha subunits. This Jannaschia sp. (strain CCS1) protein is DNA-directed RNA polymerase subunit omega.